A 323-amino-acid polypeptide reads, in one-letter code: Beta-ketoacyl-[acyl-carrier-protein] synthase III (323 aa).

Residues Cys-112 and His-248 contribute to the active site. Residues 249–253 (QANRR) form an ACP-binding region. Residue Asn-278 is part of the active site.

It belongs to the thiolase-like superfamily. FabH family. As to quaternary structure, homodimer.

The protein resides in the cytoplasm. The enzyme catalyses malonyl-[ACP] + acetyl-CoA + H(+) = 3-oxobutanoyl-[ACP] + CO2 + CoA. Its pathway is lipid metabolism; fatty acid biosynthesis. Functionally, catalyzes the condensation reaction of fatty acid synthesis by the addition to an acyl acceptor of two carbons from malonyl-ACP. Catalyzes the first condensation reaction which initiates fatty acid synthesis and may therefore play a role in governing the total rate of fatty acid production. Possesses both acetoacetyl-ACP synthase and acetyl transacylase activities. Its substrate specificity determines the biosynthesis of branched-chain and/or straight-chain of fatty acids. In Streptococcus agalactiae serotype Ia (strain ATCC 27591 / A909 / CDC SS700), this protein is Beta-ketoacyl-[acyl-carrier-protein] synthase III.